The following is a 240-amino-acid chain: Uridylate cyclase (240 aa).

The Guanylate cyclase domain occupies 45–180; the sequence is TYLYADMANS…RAPNLAAKLS (136 aa). Tyr-48 provides a ligand contact to a ribonucleoside 5'-triphosphate. The Mn(2+) site is built by Asp-50 and Asp-94. Arg-95 contributes to the a ribonucleoside 5'-triphosphate binding site.

Belongs to the adenylyl cyclase class-4/guanylyl cyclase family. Pyrimidine cyclase subfamily. As to quaternary structure, homodimer. Mn(2+) is required as a cofactor.

The protein resides in the cytoplasm. It carries out the reaction UTP = 3',5'-cyclic UMP + diphosphate. Pycsar (pyrimidine cyclase system for antiphage resistance) provides immunity against bacteriophage. The pyrimidine cyclase (PycC) synthesizes cyclic nucleotides in response to infection; these serve as specific second messenger signals. The signals activate the adjacent effector, leading to bacterial cell death and abortive phage infection. A clade B Pycsar system. Functionally, the pyrimidine cyclase gene of a two-gene Pycsar system, weakly generates cyclic UMP (cUMP) from UTP, has little to no activity on ATP, CTP or GTP. Expression of this and adjacent effector RsmPycTM (AC A0A1V0HUU2) probably confers resistance to bacteriophage. The genes are probably only expressed in response to bacteriophage infection. In Rhodovulum sp. (strain MB263), this protein is Uridylate cyclase.